The following is a 290-amino-acid chain: Lipoyl synthase (290 aa).

Positions 32, 37, 43, 58, 62, 65, and 272 each coordinate [4Fe-4S] cluster. One can recognise a Radical SAM core domain in the interval 44–261 (WGEGTATFMI…KEVAVSLGFK (218 aa)).

Belongs to the radical SAM superfamily. Lipoyl synthase family. [4Fe-4S] cluster is required as a cofactor.

It is found in the cytoplasm. The catalysed reaction is [[Fe-S] cluster scaffold protein carrying a second [4Fe-4S](2+) cluster] + N(6)-octanoyl-L-lysyl-[protein] + 2 oxidized [2Fe-2S]-[ferredoxin] + 2 S-adenosyl-L-methionine + 4 H(+) = [[Fe-S] cluster scaffold protein] + N(6)-[(R)-dihydrolipoyl]-L-lysyl-[protein] + 4 Fe(3+) + 2 hydrogen sulfide + 2 5'-deoxyadenosine + 2 L-methionine + 2 reduced [2Fe-2S]-[ferredoxin]. Its pathway is protein modification; protein lipoylation via endogenous pathway; protein N(6)-(lipoyl)lysine from octanoyl-[acyl-carrier-protein]: step 2/2. In terms of biological role, catalyzes the radical-mediated insertion of two sulfur atoms into the C-6 and C-8 positions of the octanoyl moiety bound to the lipoyl domains of lipoate-dependent enzymes, thereby converting the octanoylated domains into lipoylated derivatives. The chain is Lipoyl synthase from Pyrobaculum aerophilum (strain ATCC 51768 / DSM 7523 / JCM 9630 / CIP 104966 / NBRC 100827 / IM2).